We begin with the raw amino-acid sequence, 130 residues long: Glycine cleavage system H protein (130 aa).

Residues 24-106 (SVTVGITEHA…YGDGWIMRIQ (83 aa)) form the Lipoyl-binding domain. An N6-lipoyllysine modification is found at Lys-65.

This sequence belongs to the GcvH family. The glycine cleavage system is composed of four proteins: P, T, L and H. It depends on (R)-lipoate as a cofactor.

In terms of biological role, the glycine cleavage system catalyzes the degradation of glycine. The H protein shuttles the methylamine group of glycine from the P protein to the T protein. The chain is Glycine cleavage system H protein from Halorhodospira halophila (strain DSM 244 / SL1) (Ectothiorhodospira halophila (strain DSM 244 / SL1)).